The following is a 118-amino-acid chain: Ribosome-binding factor A (118 aa).

It belongs to the RbfA family. In terms of assembly, monomer. Binds 30S ribosomal subunits, but not 50S ribosomal subunits or 70S ribosomes.

The protein localises to the cytoplasm. In terms of biological role, one of several proteins that assist in the late maturation steps of the functional core of the 30S ribosomal subunit. Associates with free 30S ribosomal subunits (but not with 30S subunits that are part of 70S ribosomes or polysomes). Required for efficient processing of 16S rRNA. May interact with the 5'-terminal helix region of 16S rRNA. The sequence is that of Ribosome-binding factor A from Streptococcus pyogenes serotype M1.